Reading from the N-terminus, the 164-residue chain is LWamide neuropeptides (164 aa).

Positions 1–6 (RSADAQ) are excised as a propeptide. Positions 1-92 (RSADAQQHGL…WGRSADAQQP (92 aa)) are disordered. Residues Trp-11 and Trp-20 each carry the tryptophan amide modification. The propeptide occupies 23-27 (SADAQ). Tryptophan amide occurs at positions 32 and 41. A propeptide spanning residues 44 to 49 (SAEPGQ) is cleaved from the precursor. A tryptophan amide mark is found at Trp-53 and Trp-62. Positions 65 to 70 (SAEPLQ) are excised as a propeptide. A tryptophan amide mark is found at Trp-74 and Trp-83. Positions 86–90 (SADAQ) are excised as a propeptide. Residues Trp-95, Trp-106, and Trp-115 each carry the tryptophan amide modification. Positions 118-123 (SADPGQ) are excised as a propeptide. Tryptophan amide occurs at positions 127 and 137. A propeptide spanning residues 140–164 (SYEPPQFEDLEDLKKKSAIPKPSEQ) is cleaved from the precursor.

It belongs to the LWamide neuropeptide family.

Its subcellular location is the secreted. Metamorphosin A may be part of an internal signaling system involved in control of metamorphosis. This Actinia equina (Beadlet anemone) protein is LWamide neuropeptides.